A 542-amino-acid chain; its full sequence is Importin subunit alpha-1 (542 aa).

A disordered region spans residues 1–29 (MSASSRFIPEHRRQNYKGKGTFQADELRR). One can recognise an IBB domain in the interval 1–60 (MSASSRFIPEHRRQNYKGKGTFQADELRRRRETQQIEIRKQKREENLNKRRNLVDVQEPA). ARM repeat units lie at residues 114-155 (IQKV…SSNQ), 156-197 (THVV…SPMC), 198-240 (RDHV…KNPQ), 241-282 (PDWN…ANEK), 283-324 (IQAI…DDVQ), 325-366 (TQVI…NSSQ), 367-408 (IQYV…GARR), and 409-453 (PDQI…GELD).

This sequence belongs to the importin alpha family. As to quaternary structure, interacts with pap1.

Its subcellular location is the nucleus. In terms of biological role, binds specifically and directly to substrates containing either a simple or bipartite NLS motif. Promotes docking of import substrates to the nuclear envelope. Seems to act as a cytosolic receptor for both simple and bipartite NLS motifs. Has an essential role in mitotic chromosome condensation. Involved in nuclear protein import. Required for efficient nuclear import of both an SV40 nuclear localization signal-containing reporter protein and the pap1 component of the stress response MAP kinase pathway. Required for proper mitotic progression. This chain is Importin subunit alpha-1 (cut15), found in Schizosaccharomyces pombe (strain 972 / ATCC 24843) (Fission yeast).